A 375-amino-acid chain; its full sequence is Glucokinase 1 (375 aa).

Residue Cys-25–Ser-30 participates in ATP binding.

Belongs to the bacterial glucokinase family. Monomer. Post-translationally, the N-terminus is blocked.

It carries out the reaction D-glucose + ATP = D-glucose 6-phosphate + ADP + H(+). This is Glucokinase 1 (GK1) from Trichomonas vaginalis.